The following is an 82-amino-acid chain: uncharacterized protein (82 aa).

A run of 2 helical transmembrane segments spans residues 22-39 (WASD…MFIA) and 46-65 (LKMG…TWVI).

The protein resides in the cell membrane. This is an uncharacterized protein from Bacillus subtilis (strain 168).